Reading from the N-terminus, the 461-residue chain is Elongation factor 1-alpha (461 aa).

In terms of domain architecture, tr-type G spans 5–242 (KIHINIVVIG…DAILPPSRPT (238 aa)). Positions 14–21 (GHVDSGKS) are G1. 14–21 (GHVDSGKS) is a binding site for GTP. The segment at 70–74 (GITID) is G2. The interval 91-94 (DAPG) is G3. Residues 91 to 95 (DAPGH) and 153 to 156 (NKMD) each bind GTP. The G4 stretch occupies residues 153 to 156 (NKMD). A G5 region spans residues 194–196 (SGW). Residues E301 and E374 each carry the 5-glutamyl glycerylphosphorylethanolamine modification.

Belongs to the TRAFAC class translation factor GTPase superfamily. Classic translation factor GTPase family. EF-Tu/EF-1A subfamily.

The protein localises to the cytoplasm. In terms of biological role, this protein promotes the GTP-dependent binding of aminoacyl-tRNA to the A-site of ribosomes during protein biosynthesis. This Apis mellifera (Honeybee) protein is Elongation factor 1-alpha.